Here is a 195-residue protein sequence, read N- to C-terminus: Kiwa protein KwaA (195 aa).

Transmembrane regions (helical) follow at residues Gly10 to Ile30, Leu46 to Phe66, and Ile117 to Tyr137.

It is found in the cell inner membrane. Component of antiviral defense system Kiwa, composed of KwaA and KwaB. Expression of Kiwa in E.coli (strain MG1655) confers resistance to phages lambda and SECphi18. This Escherichia coli O55:H7 (strain RM12579 / EPEC) protein is Kiwa protein KwaA.